The chain runs to 331 residues: Probable cytosolic iron-sulfur protein assembly protein Ciao1 (331 aa).

WD repeat units follow at residues 12 to 51 (GHKG…WTTK), 57 to 96 (GHKR…ATLE), 97 to 136 (GHEN…EFEC), 142 to 181 (AHSQ…SDWD), 188 to 227 (SHTS…NEAG), 246 to 285 (LHTR…KRDA), and 297 to 331 (AHEQ…KLQE).

This sequence belongs to the WD repeat CIA1 family.

Essential component of the cytosolic iron-sulfur (Fe/S) protein assembly machinery. Required for the maturation of extramitochondrial Fe/S proteins. The polypeptide is Probable cytosolic iron-sulfur protein assembly protein Ciao1 (Drosophila mojavensis (Fruit fly)).